The following is a 132-amino-acid chain: Protein NrdI (132 aa).

The protein belongs to the NrdI family.

Probably involved in ribonucleotide reductase function. The sequence is that of Protein NrdI from Bartonella henselae (strain ATCC 49882 / DSM 28221 / CCUG 30454 / Houston 1) (Rochalimaea henselae).